Here is an 875-residue protein sequence, read N- to C-terminus: Serine/threonine-protein kinase ATG1 (875 aa).

One can recognise a Protein kinase domain in the interval 22–318 (YSIGPEIGKG…FNEFFNDPLI (297 aa)). Residues 28–36 (IGKGSFATV) and Lys-51 contribute to the ATP site. The active-site Proton acceptor is the Asp-168. Residues 367 to 379 (EKSKQDLPAREVS) are compositionally biased toward basic and acidic residues. Disordered stretches follow at residues 367–422 (EKSK…QPHN) and 470–515 (INPR…DRRI). Over residues 380 to 389 (THASESQTKA) the composition is skewed to polar residues. Positions 390 to 405 (VDTRPSSRDEEIKEII) are enriched in basic and acidic residues. Composition is skewed to polar residues over residues 406–420 (NKNS…SIQP), 473–490 (RRTS…NNMQ), and 497–508 (LRSNSSGSQRRP).

It belongs to the protein kinase superfamily. Ser/Thr protein kinase family. APG1/unc-51/ULK1 subfamily. In terms of assembly, homodimer. Forms a ternary complex with ATG13 and ATG17.

The protein resides in the cytoplasm. Its subcellular location is the preautophagosomal structure membrane. The catalysed reaction is L-seryl-[protein] + ATP = O-phospho-L-seryl-[protein] + ADP + H(+). It carries out the reaction L-threonyl-[protein] + ATP = O-phospho-L-threonyl-[protein] + ADP + H(+). Functionally, serine/threonine protein kinase involved in the cytoplasm to vacuole transport (Cvt) and found to be essential in autophagy, where it is required for the formation of autophagosomes. Involved in the clearance of protein aggregates which cannot be efficiently cleared by the proteasome. Required for selective autophagic degradation of the nucleus (nucleophagy) as well as for mitophagy which contributes to regulate mitochondrial quantity and quality by eliminating the mitochondria to a basal level to fulfill cellular energy requirements and preventing excess ROS production. Also involved in endoplasmic reticulum-specific autophagic process, in selective removal of ER-associated degradation (ERAD) substrates. Plays a key role in ATG9 and ATG23 cycling through the pre-autophagosomal structure and is necessary to promote ATG18 binding to ATG9 through phosphorylation of ATG9. Catalyzes phosphorylation of ATG4, decreasing the interaction between ATG4 and ATG8 and impairing deconjugation of PE-conjugated forms of ATG8. This Debaryomyces hansenii (strain ATCC 36239 / CBS 767 / BCRC 21394 / JCM 1990 / NBRC 0083 / IGC 2968) (Yeast) protein is Serine/threonine-protein kinase ATG1.